The sequence spans 208 residues: Putative dioxygenase RC0543 (208 aa).

The protein belongs to the intradiol ring-cleavage dioxygenase family.

The chain is Putative dioxygenase RC0543 from Rickettsia conorii (strain ATCC VR-613 / Malish 7).